Consider the following 274-residue polypeptide: Prothoracicostatic peptide (274 aa).

Positions 1–19 are cleaved as a signal peptide; sequence MRWCLFALWVFGVATVVTA. Residues 20 to 67 constitute a propeptide that is removed on maturation; sequence AEEPHHDAAPQTDNEVDLTEDDKRAWSSLHSGWAKRAWQDMSSAWGKR. Tryptophan 76 carries the post-translational modification Tryptophan amide. Positions 77–91 are excised as a propeptide; that stretch reads GKRGWQDLNSAWGKR. Tryptophan 100 carries the post-translational modification Tryptophan amide. A propeptide spanning residues 101–136 is cleaved from the precursor; that stretch reads GKRGWQDLNSAWGKRDDDEAMEKKSWQDLNSVWGKR. Residue tryptophan 145 is modified to Tryptophan amide. Residues 146–148 constitute a propeptide that is removed on maturation; it reads GKR. Position 157 is a tryptophan amide (tryptophan 157). A propeptide spanning residues 158–172 is cleaved from the precursor; the sequence is GKRGWNDISSVWGKR. Position 181 is a tryptophan amide (tryptophan 181). Residues 182–274 constitute a propeptide that is removed on maturation; it reads GKRAWQDMSS…NEHSATTNEA (93 aa).

It is found in the secreted. In terms of biological role, inhibits ecdysteroid biosynthesis in the prothoracic gland of fifth instar larvae, with maximum inhibition during the spinning stage. When administered to day 8 fifth instar larvae it produces a significant delay in the commencement spinning behavior. The sequence is that of Prothoracicostatic peptide from Bombyx mori (Silk moth).